We begin with the raw amino-acid sequence, 151 residues long: Ribosome maturation factor RimP (151 aa).

Belongs to the RimP family.

It is found in the cytoplasm. Required for maturation of 30S ribosomal subunits. The chain is Ribosome maturation factor RimP from Halorhodospira halophila (strain DSM 244 / SL1) (Ectothiorhodospira halophila (strain DSM 244 / SL1)).